The primary structure comprises 432 residues: Glutamyl-tRNA reductase (432 aa).

Residues 49-52, Ser-109, 114-116, and Gln-120 contribute to the substrate site; these read TCNR and EGQ. Cys-50 serves as the catalytic Nucleophile. Position 189–194 (189–194) interacts with NADP(+); that stretch reads GAGKMS.

The protein belongs to the glutamyl-tRNA reductase family. As to quaternary structure, homodimer.

The catalysed reaction is (S)-4-amino-5-oxopentanoate + tRNA(Glu) + NADP(+) = L-glutamyl-tRNA(Glu) + NADPH + H(+). Its pathway is porphyrin-containing compound metabolism; protoporphyrin-IX biosynthesis; 5-aminolevulinate from L-glutamyl-tRNA(Glu): step 1/2. It functions in the pathway porphyrin-containing compound metabolism; chlorophyll biosynthesis. In terms of biological role, catalyzes the NADPH-dependent reduction of glutamyl-tRNA(Glu) to glutamate 1-semialdehyde (GSA). This chain is Glutamyl-tRNA reductase, found in Cyanothece sp. (strain PCC 7425 / ATCC 29141).